A 926-amino-acid chain; its full sequence is Ubiquitin carboxyl-terminal hydrolase 4 (926 aa).

The region spanning 205–328 (SQMEILLIDI…WLKSNYGRQV (124 aa)) is the Rhodanese domain. Ser-443 is subject to Phosphoserine. The region spanning 562–923 (VGLENLGNSC…NAYVLFYHRV (362 aa)) is the USP domain. Cys-571 acts as the Nucleophile in catalysis. His-880 (proton acceptor) is an active-site residue.

It belongs to the peptidase C19 family. As to quaternary structure, interacts with BRO1, RFU1 and VPS32. Associates with the 26S proteasome.

The protein localises to the cytoplasm. It localises to the late endosome membrane. It catalyses the reaction Thiol-dependent hydrolysis of ester, thioester, amide, peptide and isopeptide bonds formed by the C-terminal Gly of ubiquitin (a 76-residue protein attached to proteins as an intracellular targeting signal).. RFU1 is an inhibitor of deubiquitination activity. In terms of biological role, ubiquitin thioesterase that acts at the late endosome/prevacuolar compartment to recover ubiquitin from ubiquitinated membrane proteins en route to the vacuole. Also removes ubiquitin from soluble proteins targeted to proteasomes. Is essential to maintain a normal level of free ubiquitin. Involved in the ammonium-induced down-regulation of the GAP1 permease and the UME3 destruction in response to oxidative stress. Has a role in the RAD9 checkpoint response to TOP1 poisons. Required for promoting coordination of DNA replication and avoids DNA overreplication. The protein is Ubiquitin carboxyl-terminal hydrolase 4 (DOA4) of Saccharomyces cerevisiae (strain RM11-1a) (Baker's yeast).